A 229-amino-acid polypeptide reads, in one-letter code: 5'-methylthioadenosine/S-adenosylhomocysteine nucleosidase (229 aa).

Catalysis depends on glutamate 12, which acts as the Proton acceptor. Substrate contacts are provided by residues glycine 78, isoleucine 152, and 173–174 (ME). Aspartate 197 functions as the Proton donor in the catalytic mechanism.

The protein belongs to the PNP/UDP phosphorylase family. MtnN subfamily.

It catalyses the reaction S-adenosyl-L-homocysteine + H2O = S-(5-deoxy-D-ribos-5-yl)-L-homocysteine + adenine. The catalysed reaction is S-methyl-5'-thioadenosine + H2O = 5-(methylsulfanyl)-D-ribose + adenine. It carries out the reaction 5'-deoxyadenosine + H2O = 5-deoxy-D-ribose + adenine. It functions in the pathway amino-acid biosynthesis; L-methionine biosynthesis via salvage pathway; S-methyl-5-thio-alpha-D-ribose 1-phosphate from S-methyl-5'-thioadenosine (hydrolase route): step 1/2. Functionally, catalyzes the irreversible cleavage of the glycosidic bond in both 5'-methylthioadenosine (MTA) and S-adenosylhomocysteine (SAH/AdoHcy) to adenine and the corresponding thioribose, 5'-methylthioribose and S-ribosylhomocysteine, respectively. Also cleaves 5'-deoxyadenosine, a toxic by-product of radical S-adenosylmethionine (SAM) enzymes, into 5-deoxyribose and adenine. The chain is 5'-methylthioadenosine/S-adenosylhomocysteine nucleosidase from Pasteurella multocida (strain Pm70).